The sequence spans 140 residues: Nucleoside diphosphate kinase (140 aa).

ATP-binding residues include Lys-11, Phe-59, Arg-87, Thr-93, Arg-104, and Asn-114. His-117 functions as the Pros-phosphohistidine intermediate in the catalytic mechanism.

The protein belongs to the NDK family. Homotetramer. Mg(2+) serves as cofactor.

It is found in the cytoplasm. The enzyme catalyses a 2'-deoxyribonucleoside 5'-diphosphate + ATP = a 2'-deoxyribonucleoside 5'-triphosphate + ADP. The catalysed reaction is a ribonucleoside 5'-diphosphate + ATP = a ribonucleoside 5'-triphosphate + ADP. Major role in the synthesis of nucleoside triphosphates other than ATP. The ATP gamma phosphate is transferred to the NDP beta phosphate via a ping-pong mechanism, using a phosphorylated active-site intermediate. This chain is Nucleoside diphosphate kinase, found in Methylocella silvestris (strain DSM 15510 / CIP 108128 / LMG 27833 / NCIMB 13906 / BL2).